The following is a 196-amino-acid chain: Anthranilate synthase component 2 (196 aa).

Positions 1–195 (MLLLIDNYDS…LNTTRRLETA (195 aa)) constitute a Glutamine amidotransferase type-1 domain. Residue 52–54 (GPC) participates in L-glutamine binding. Cys-80 functions as the Nucleophile; for GATase activity in the catalytic mechanism. Residues Gln-84 and 130–131 (SL) each bind L-glutamine. Active-site for GATase activity residues include His-169 and Glu-171.

Heterotetramer consisting of two non-identical subunits: a beta subunit (TrpG) and a large alpha subunit (TrpE).

It catalyses the reaction chorismate + L-glutamine = anthranilate + pyruvate + L-glutamate + H(+). Its pathway is amino-acid biosynthesis; L-tryptophan biosynthesis; L-tryptophan from chorismate: step 1/5. In terms of biological role, part of a heterotetrameric complex that catalyzes the two-step biosynthesis of anthranilate, an intermediate in the biosynthesis of L-tryptophan. In the first step, the glutamine-binding beta subunit (TrpG) of anthranilate synthase (AS) provides the glutamine amidotransferase activity which generates ammonia as a substrate that, along with chorismate, is used in the second step, catalyzed by the large alpha subunit of AS (TrpE) to produce anthranilate. In the absence of TrpG, TrpE can synthesize anthranilate directly from chorismate and high concentrations of ammonia. Participates in the tryptophan-dependent indole-3-acetic acid production, which is a phytohormone released by A.brasilense. The polypeptide is Anthranilate synthase component 2 (trpG) (Azospirillum brasilense).